We begin with the raw amino-acid sequence, 270 residues long: Orotidine 5'-phosphate decarboxylase (270 aa).

The active-site Proton donor is Lys89.

This sequence belongs to the OMP decarboxylase family. Type 2 subfamily.

It carries out the reaction orotidine 5'-phosphate + H(+) = UMP + CO2. It participates in pyrimidine metabolism; UMP biosynthesis via de novo pathway; UMP from orotate: step 2/2. This chain is Orotidine 5'-phosphate decarboxylase, found in Dehalococcoides mccartyi (strain ATCC BAA-2100 / JCM 16839 / KCTC 5957 / BAV1).